The sequence spans 128 residues: Large ribosomal subunit protein bL17 (128 aa).

The protein belongs to the bacterial ribosomal protein bL17 family. In terms of assembly, part of the 50S ribosomal subunit. Contacts protein L32.

This is Large ribosomal subunit protein bL17 from Vibrio cholerae serotype O1 (strain ATCC 39541 / Classical Ogawa 395 / O395).